A 3342-amino-acid polypeptide reads, in one-letter code: Large tegument protein deneddylase (3342 aa).

The deubiquitination activity stretch occupies residues 1-302; that stretch reads MTDSTDSRQA…SRIYGTSDIV (302 aa). In terms of domain architecture, Peptidase C76 spans 78–298; it reads VAVGIRNQFA…ISTVSRIYGT (221 aa). Catalysis depends on residues Cys98, Asp232, and His234. The segment at 472–554 is disordered; sequence RRPLWTPQSS…SPTTSNRGED (83 aa). The span at 480–494 shows a compositional bias: low complexity; that stretch reads SSSENISLDGSSSSL. The segment covering 514–526 has biased composition (polar residues); that stretch reads VTSTESSDVTENV. The segment at 630–656 is interaction with inner tegument protein; that stretch reads LYVCMMDIFARLFNYIIENGARTTSDR. Disordered regions lie at residues 2584–2603, 2654–2987, and 3196–3279; these read DGDA…TYAD, PQIG…SRKH, and PKHD…SSTS. Composition is skewed to pro residues over residues 2701-2743, 2751-2777, 2785-2799, 2823-2837, and 2845-2897; these read TPAP…PKPK, KPSP…PKPK, KPTP…SKPK, and KPTP…PKPK. Polar residues predominate over residues 2911–2947; sequence NSDSKTSPVPNPNTFSASKIPPTSSIAEETKPCQSNL. Residues 3264 to 3279 are compositionally biased toward low complexity; that stretch reads HVSGSTDTTTDGSSTS.

The protein belongs to the herpesviridae large tegument protein family. In terms of assembly, interacts with host CUL1 and CUL4A; these interactions inhibit the E3 ligase activity of cullins. Interacts with inner tegument protein. Interacts with capsid vertex specific component CVC2. Interacts with the major capsid protein/MCP.

It is found in the virion tegument. It localises to the host cytoplasm. The protein localises to the host nucleus. The catalysed reaction is Thiol-dependent hydrolysis of ester, thioester, amide, peptide and isopeptide bonds formed by the C-terminal Gly of ubiquitin (a 76-residue protein attached to proteins as an intracellular targeting signal).. Functionally, large tegument protein that plays multiple roles in the viral cycle. During viral entry, remains associated with the capsid while most of the tegument is detached and participates in the capsid transport toward the host nucleus. Plays a role in the routing of the capsid at the nuclear pore complex and subsequent uncoating. Within the host nucleus, acts as a deneddylase and promotes the degradation of nuclear CRLs (cullin-RING ubiquitin ligases) and thereby stabilizes nuclear CRL substrates, while cytoplasmic CRLs remain unaffected. These modifications prevent host cell cycle S-phase progression and create a favorable environment allowing efficient viral genome replication. Participates later in the secondary envelopment of capsids. Indeed, plays a linker role for the association of the outer viral tegument to the capsids together with the inner tegument protein. In Gallus gallus (Chicken), this protein is Large tegument protein deneddylase (MDV049).